The following is a 201-amino-acid chain: 3-isopropylmalate dehydratase small subunit (201 aa).

The protein belongs to the LeuD family. LeuD type 1 subfamily. As to quaternary structure, heterodimer of LeuC and LeuD.

It catalyses the reaction (2R,3S)-3-isopropylmalate = (2S)-2-isopropylmalate. The protein operates within amino-acid biosynthesis; L-leucine biosynthesis; L-leucine from 3-methyl-2-oxobutanoate: step 2/4. Its function is as follows. Catalyzes the isomerization between 2-isopropylmalate and 3-isopropylmalate, via the formation of 2-isopropylmaleate. This chain is 3-isopropylmalate dehydratase small subunit, found in Nitrobacter hamburgensis (strain DSM 10229 / NCIMB 13809 / X14).